We begin with the raw amino-acid sequence, 136 residues long: Small ribosomal subunit protein bS6 (136 aa).

The segment covering 97–128 (EKEQSAMLSRPDRDDFPGKDEERPRPSRRQYE) has biased composition (basic and acidic residues). A disordered region spans residues 97–136 (EKEQSAMLSRPDRDDFPGKDEERPRPSRRQYEDVVEGGVE).

It belongs to the bacterial ribosomal protein bS6 family.

Its function is as follows. Binds together with bS18 to 16S ribosomal RNA. This Bartonella bacilliformis (strain ATCC 35685 / KC583 / Herrer 020/F12,63) protein is Small ribosomal subunit protein bS6.